A 420-amino-acid polypeptide reads, in one-letter code: C-methyltransferase NovU (420 aa).

It belongs to the methyltransferase superfamily.

It participates in antibiotic biosynthesis; novobiocin biosynthesis. Functionally, C-methyltransferase that acts together with NovW to catalyze the formation of dTDP-4-keto-6-deoxy-5-C-methyl-L-lyxo-hexose from dTDP-4-keto-6-deoxy-D-glucose in the novobiocin biosynthesis pathway, an aminocoumarin family antibiotic that targets bacterial DNA gyrases. This is C-methyltransferase NovU (novU) from Streptomyces niveus (Streptomyces spheroides).